A 199-amino-acid chain; its full sequence is NAD(P)H dehydrogenase (quinone) (199 aa).

The Flavodoxin-like domain occupies 4–190; that stretch reads VLVLYYSAYG…AGARYQGRVI (187 aa). Residues 10–15 and 78–80 contribute to the FMN site; these read SAYGHI and TRF. Tyr12 is an NAD(+) binding site. Residue Trp98 participates in substrate binding. FMN is bound by residues 113–119 and His134; that span reads STATQHG.

Belongs to the WrbA family. The cofactor is FMN.

It catalyses the reaction a quinone + NADH + H(+) = a quinol + NAD(+). The catalysed reaction is a quinone + NADPH + H(+) = a quinol + NADP(+). This is NAD(P)H dehydrogenase (quinone) from Bradyrhizobium sp. (strain ORS 278).